Reading from the N-terminus, the 111-residue chain is UPF0060 membrane protein XAC3064 (111 aa).

The next 4 membrane-spanning stretches (helical) occupy residues leucine 8 to tryptophan 28, glycine 32 to leucine 52, alanine 64 to valine 84, and leucine 91 to alanine 111.

This sequence belongs to the UPF0060 family.

The protein localises to the cell inner membrane. This chain is UPF0060 membrane protein XAC3064, found in Xanthomonas axonopodis pv. citri (strain 306).